A 367-amino-acid polypeptide reads, in one-letter code: tRNA pseudouridine synthase D (367 aa).

The Nucleophile role is filled by aspartate 78. The region spanning glycine 153–threonine 300 is the TRUD domain.

Belongs to the pseudouridine synthase TruD family.

The enzyme catalyses uridine(13) in tRNA = pseudouridine(13) in tRNA. Responsible for synthesis of pseudouridine from uracil-13 in transfer RNAs. This is tRNA pseudouridine synthase D from Colwellia psychrerythraea (strain 34H / ATCC BAA-681) (Vibrio psychroerythus).